We begin with the raw amino-acid sequence, 432 residues long: Enolase (432 aa).

(2R)-2-phosphoglycerate is bound at residue Gln-167. Glu-209 serves as the catalytic Proton donor. The Mg(2+) site is built by Asp-246, Glu-291, and Asp-318. Positions 343, 372, 373, and 394 each coordinate (2R)-2-phosphoglycerate. The Proton acceptor role is filled by Lys-343.

The protein belongs to the enolase family. In terms of assembly, component of the RNA degradosome, a multiprotein complex involved in RNA processing and mRNA degradation. Mg(2+) is required as a cofactor.

It localises to the cytoplasm. The protein resides in the secreted. Its subcellular location is the cell surface. It catalyses the reaction (2R)-2-phosphoglycerate = phosphoenolpyruvate + H2O. The protein operates within carbohydrate degradation; glycolysis; pyruvate from D-glyceraldehyde 3-phosphate: step 4/5. Catalyzes the reversible conversion of 2-phosphoglycerate (2-PG) into phosphoenolpyruvate (PEP). It is essential for the degradation of carbohydrates via glycolysis. This is Enolase from Pseudoalteromonas translucida (strain TAC 125).